A 581-amino-acid polypeptide reads, in one-letter code: Chaperonin GroEL 1 (581 aa).

ATP contacts are provided by residues 29–32, 86–90, G413, and D492; these read TIGP and DGTTT.

Belongs to the chaperonin (HSP60) family. As to quaternary structure, forms a cylinder of 14 subunits composed of two heptameric rings stacked back-to-back. Interacts with the co-chaperonin GroES.

Its subcellular location is the cytoplasm. It catalyses the reaction ATP + H2O + a folded polypeptide = ADP + phosphate + an unfolded polypeptide.. Its function is as follows. Together with its co-chaperonin GroES, plays an essential role in assisting protein folding. The GroEL-GroES system forms a nano-cage that allows encapsulation of the non-native substrate proteins and provides a physical environment optimized to promote and accelerate protein folding. The sequence is that of Chaperonin GroEL 1 from Prochlorococcus marinus subsp. pastoris (strain CCMP1986 / NIES-2087 / MED4).